A 363-amino-acid chain; its full sequence is Carbamoyl phosphate synthase small chain (363 aa).

Positions 1 to 172 are CPSase; the sequence is MTKRILMLED…AFASPGDGKR (172 aa). Residues serine 46, glycine 220, and glycine 222 each contribute to the L-glutamine site. One can recognise a Glutamine amidotransferase type-1 domain in the interval 172–359; the sequence is RVVLVDYGVK…MEMMNGKEEG (188 aa). Cysteine 247 acts as the Nucleophile in catalysis. L-glutamine contacts are provided by leucine 248, glutamine 251, asparagine 289, glycine 291, and tyrosine 292. Active-site residues include histidine 332 and glutamate 334.

Belongs to the CarA family. Composed of two chains; the small (or glutamine) chain promotes the hydrolysis of glutamine to ammonia, which is used by the large (or ammonia) chain to synthesize carbamoyl phosphate. Tetramer of heterodimers (alpha,beta)4.

The enzyme catalyses hydrogencarbonate + L-glutamine + 2 ATP + H2O = carbamoyl phosphate + L-glutamate + 2 ADP + phosphate + 2 H(+). It carries out the reaction L-glutamine + H2O = L-glutamate + NH4(+). Its pathway is amino-acid biosynthesis; L-arginine biosynthesis; carbamoyl phosphate from bicarbonate: step 1/1. It functions in the pathway pyrimidine metabolism; UMP biosynthesis via de novo pathway; (S)-dihydroorotate from bicarbonate: step 1/3. Its function is as follows. Small subunit of the glutamine-dependent carbamoyl phosphate synthetase (CPSase). CPSase catalyzes the formation of carbamoyl phosphate from the ammonia moiety of glutamine, carbonate, and phosphate donated by ATP, constituting the first step of 2 biosynthetic pathways, one leading to arginine and/or urea and the other to pyrimidine nucleotides. The small subunit (glutamine amidotransferase) binds and cleaves glutamine to supply the large subunit with the substrate ammonia. The polypeptide is Carbamoyl phosphate synthase small chain (Listeria monocytogenes serotype 4b (strain F2365)).